Reading from the N-terminus, the 133-residue chain is ATP synthase epsilon chain (133 aa).

Residues 81–110 are disordered; sequence AAERPEQIDTERARKAKERAEQRLASEHVD.

The protein belongs to the ATPase epsilon chain family. In terms of assembly, F-type ATPases have 2 components, CF(1) - the catalytic core - and CF(0) - the membrane proton channel. CF(1) has five subunits: alpha(3), beta(3), gamma(1), delta(1), epsilon(1). CF(0) has three main subunits: a, b and c.

Its subcellular location is the cell membrane. Its function is as follows. Produces ATP from ADP in the presence of a proton gradient across the membrane. The protein is ATP synthase epsilon chain of Shouchella clausii (strain KSM-K16) (Alkalihalobacillus clausii).